Consider the following 138-residue polypeptide: Small ribosomal subunit protein uS11c (138 aa).

The segment at 1 to 23 (MAKPIPRIGSRKNGRIGSRKSGR) is disordered. A compositionally biased stretch (basic residues) spans 9–23 (GSRKNGRIGSRKSGR).

This sequence belongs to the universal ribosomal protein uS11 family. Part of the 30S ribosomal subunit.

It localises to the plastid. The protein localises to the chloroplast. In Buxus microphylla (Littleleaf boxwood), this protein is Small ribosomal subunit protein uS11c.